The chain runs to 121 residues: Mitochondrial intermembrane space cysteine motif-containing protein MIX14 (121 aa).

CHCH domains lie at 14 to 56 (VANC…VPSV) and 60 to 105 (MSEC…VKNK). 4 consecutive short sequence motifs (cx9C motif) follow at residues 17-27 (CPQEFLQYHKC), 38-48 (CKDGRMILSTC), 63-73 (CSEPMKKYDQC), and 87-97 (CLGFLQDLRKC). 4 cysteine pairs are disulfide-bonded: C17/C48, C27/C38, C63/C97, and C73/C87.

The protein localises to the mitochondrion intermembrane space. The polypeptide is Mitochondrial intermembrane space cysteine motif-containing protein MIX14 (MIX14) (Saccharomyces cerevisiae (strain ATCC 204508 / S288c) (Baker's yeast)).